Reading from the N-terminus, the 92-residue chain is Small ribosomal subunit protein bS20 (92 aa).

This sequence belongs to the bacterial ribosomal protein bS20 family.

Its function is as follows. Binds directly to 16S ribosomal RNA. In Thermosipho africanus (strain TCF52B), this protein is Small ribosomal subunit protein bS20.